The sequence spans 398 residues: Enoyl-[acyl-carrier-protein] reductase [NADH] (398 aa).

NAD(+) is bound by residues 48–53 (GASTGY), 74–75 (FE), 111–112 (DA), and 139–140 (LA). Tyrosine 225 is a substrate binding site. The Proton donor role is filled by tyrosine 235. NAD(+) contacts are provided by residues lysine 244 and 273-275 (VVT).

The protein belongs to the TER reductase family. As to quaternary structure, monomer.

It catalyses the reaction a 2,3-saturated acyl-[ACP] + NAD(+) = a (2E)-enoyl-[ACP] + NADH + H(+). Its pathway is lipid metabolism; fatty acid biosynthesis. Its function is as follows. Involved in the final reduction of the elongation cycle of fatty acid synthesis (FAS II). Catalyzes the reduction of a carbon-carbon double bond in an enoyl moiety that is covalently linked to an acyl carrier protein (ACP). This Paraburkholderia phytofirmans (strain DSM 17436 / LMG 22146 / PsJN) (Burkholderia phytofirmans) protein is Enoyl-[acyl-carrier-protein] reductase [NADH].